A 216-amino-acid polypeptide reads, in one-letter code: Holliday junction branch migration complex subunit RuvA (216 aa).

The segment at 1 to 64 is domain I; it reads MISFIKGVLI…EDAQQLYGFK (64 aa). Residues 65-143 form a domain II region; the sequence is SKVDKKVFQE…KMANEIYAQT (79 aa). The tract at residues 144–163 is flexible linker; sequence SGTTTTSQDSQAQQAPTSVV. A domain III region spans residues 164 to 216; sequence LANSIFNESVDALLALGYKQKDAEKMARSAMGDATTAAEVIRKALQGSIKSKR.

This sequence belongs to the RuvA family. Homotetramer. Forms an RuvA(8)-RuvB(12)-Holliday junction (HJ) complex. HJ DNA is sandwiched between 2 RuvA tetramers; dsDNA enters through RuvA and exits via RuvB. An RuvB hexamer assembles on each DNA strand where it exits the tetramer. Each RuvB hexamer is contacted by two RuvA subunits (via domain III) on 2 adjacent RuvB subunits; this complex drives branch migration. In the full resolvosome a probable DNA-RuvA(4)-RuvB(12)-RuvC(2) complex forms which resolves the HJ.

Its subcellular location is the cytoplasm. Functionally, the RuvA-RuvB-RuvC complex processes Holliday junction (HJ) DNA during genetic recombination and DNA repair, while the RuvA-RuvB complex plays an important role in the rescue of blocked DNA replication forks via replication fork reversal (RFR). RuvA specifically binds to HJ cruciform DNA, conferring on it an open structure. The RuvB hexamer acts as an ATP-dependent pump, pulling dsDNA into and through the RuvAB complex. HJ branch migration allows RuvC to scan DNA until it finds its consensus sequence, where it cleaves and resolves the cruciform DNA. In Francisella tularensis subsp. mediasiatica (strain FSC147), this protein is Holliday junction branch migration complex subunit RuvA.